We begin with the raw amino-acid sequence, 183 residues long: Peptidyl-prolyl cis-trans isomerase 11 (183 aa).

Residues 20 to 182 (FLEVTAGGAP…LPIVVVQCGQ (163 aa)) enclose the PPIase cyclophilin-type domain.

Belongs to the cyclophilin-type PPIase family. PPIase H subfamily.

It catalyses the reaction [protein]-peptidylproline (omega=180) = [protein]-peptidylproline (omega=0). In terms of biological role, PPIases accelerate the folding of proteins. It catalyzes the cis-trans isomerization of proline imidic peptide bonds in oligopeptides. This Caenorhabditis elegans protein is Peptidyl-prolyl cis-trans isomerase 11 (cyn-11).